The primary structure comprises 189 residues: Large ribosomal subunit protein uL6 (189 aa).

Belongs to the universal ribosomal protein uL6 family. In terms of assembly, part of the 50S ribosomal subunit.

In terms of biological role, this protein binds to the 23S rRNA, and is important in its secondary structure. It is located near the subunit interface in the base of the L7/L12 stalk, and near the tRNA binding site of the peptidyltransferase center. The polypeptide is Large ribosomal subunit protein uL6 (Bacteroides fragilis (strain ATCC 25285 / DSM 2151 / CCUG 4856 / JCM 11019 / LMG 10263 / NCTC 9343 / Onslow / VPI 2553 / EN-2)).